We begin with the raw amino-acid sequence, 694 residues long: U-box domain-containing protein 1 (694 aa).

The 75-residue stretch at 292–366 (NIPDEFRCPI…HQWCYENNVK (75 aa)) folds into the U-box domain. ARM repeat units lie at residues 392-432 (SENK…LLAK), 435-474 (MDNR…NLSI), 476-516 (DNNK…SLSM), 519-558 (DCKV…NLAV), 560-599 (NPNK…VLLG), 601-641 (SEGL…GLCK), and 646-685 (LVAM…LLNR).

As to quaternary structure, interacts with LYK3. Binds to NORK/DMI2. Post-translationally, phosphorylated by LYK3 in vitro. Phosphorylated by NORK/DMI2. In terms of tissue distribution, present ubiquitously at very low levels during nonsymbiotic growth. Accumulates in roots and nodules during symbiotic growth with rhizobia and mycorrhiza.

It is found in the cell membrane. It carries out the reaction S-ubiquitinyl-[E2 ubiquitin-conjugating enzyme]-L-cysteine + [acceptor protein]-L-lysine = [E2 ubiquitin-conjugating enzyme]-L-cysteine + N(6)-ubiquitinyl-[acceptor protein]-L-lysine.. Its pathway is protein modification; protein ubiquitination. Functionally, exhibits U-box-dependent E3 ubiquitin ligase activity in vitro. Negatively modulates successive stages of infection and development of rhizobial (e.g. Sinorhizobium meliloti) and arbuscular mycorrhizal fungi (AM, e.g. Rhizophagus irregularis) symbioses, in an ubiquitin ligase activity-dependent manner. Negative regulator of the LYK3 signaling pathway leading to nitrogen-fixing symbiosis (e.g. infection and nodulation) by rhizobia. May be involved in the discrimination of rhizobium strains producing variant Nod factors. The protein is U-box domain-containing protein 1 of Medicago truncatula (Barrel medic).